The following is a 253-amino-acid chain: Sulfate transporter CysZ (253 aa).

4 consecutive transmembrane segments (helical) span residues 31–51, 75–95, 151–171, and 222–242; these read FVILPLLVNILLMGGAFWWLF, LLWPLAVISVLLVFGYFFSTI, IVLLILYLIPGIGQTVTPVLW, and IPLLNLFIMPVAVCGATAMWV.

The protein belongs to the CysZ family.

It is found in the cell inner membrane. In terms of biological role, high affinity, high specificity proton-dependent sulfate transporter, which mediates sulfate uptake. Provides the sulfur source for the cysteine synthesis pathway. This is Sulfate transporter CysZ from Escherichia coli O8 (strain IAI1).